Consider the following 222-residue polypeptide: MQADFWQKRWERDQIGFHLAEVNPYLQQYWPALGLAAQSRVLVPLCGKSLDLIWLADQGFEVLGIELAEKAVEDFFREHQLQPQISQHGVFKVYAHGPIELWCGDFFALTAEDTADCTALYDRAAMIALPSPMRQRYAAHLNGLLPNGSKGLLITMDYAQEQLDGPPFAVLDDEVRQRLGGVWQLQVETERDILGESWKFLQGGVTRLVERVYRLSKQGAAR.

The S-adenosyl-L-methionine site is built by tryptophan 10, leucine 45, glutamate 66, and arginine 123.

It belongs to the class I-like SAM-binding methyltransferase superfamily. TPMT family.

The protein resides in the cytoplasm. It catalyses the reaction S-adenosyl-L-methionine + a thiopurine = S-adenosyl-L-homocysteine + a thiopurine S-methylether.. The sequence is that of Thiopurine S-methyltransferase from Pseudomonas fluorescens (strain ATCC BAA-477 / NRRL B-23932 / Pf-5).